A 296-amino-acid chain; its full sequence is Non-selective voltage-gated ion channel VDAC2 (296 aa).

Position 25 (Lys-25) interacts with ATP. Residue Lys-25 forms a Glycyl lysine isopeptide (Lys-Gly) (interchain with G-Cter in ubiquitin) linkage. Phosphoserine is present on Ser-26. Position 33 (Lys-33) interacts with ATP. At Lys-33 the chain carries N6-acetyllysine; alternate. Lys-33 is modified (N6-succinyllysine; alternate). A Glycyl lysine isopeptide (Lys-Gly) (interchain with G-Cter in ubiquitin); alternate cross-link involves residue Lys-33. Beta stranded transmembrane passes span 39–48 (LVKLDVKTKS) and 52–60 (VEFTTSGSS). Glycyl lysine isopeptide (Lys-Gly) (interchain with G-Cter in ubiquitin) cross-links involve residues Lys-66 and Lys-74. Residues 67-77 (VNGSLETKYKW) traverse the membrane as a beta stranded segment. At Tyr-80 the chain carries Phosphotyrosine. Transmembrane regions (beta stranded) follow at residues 82-89 (LTFTEKWN), 93-102 (TLGTEIAIED), and 108-117 (LKLTFDTTFS). Residue Thr-120 is modified to Phosphothreonine. Position 122 is an N6-acetyllysine; alternate (Lys-122). Lys-122 participates in a covalent cross-link: Glycyl lysine isopeptide (Lys-Gly) (interchain with G-Cter in ubiquitin); alternate. Lys-123 is covalently cross-linked (Glycyl lysine isopeptide (Lys-Gly) (interchain with G-Cter in ubiquitin)). 4 consecutive transmembrane segments (beta stranded) span residues 124–133 (SGKIKSAYKR), 136–143 (LNLGCDVD), 150–158 (AIHGSAVFG), and 163–171 (LAGYQMTFD). Residue Lys-174 forms a Glycyl lysine isopeptide (Lys-Gly) (interchain with G-Cter in ubiquitin) linkage. 6 beta stranded membrane passes run 176–188 (KLTRNNFSVGYKT), 191–198 (FQLHTNVN), 202–211 (EFGGSIYQKV), 215–224 (LETAVNLAWT), 231–240 (RFGIAAKYKL), and 244–251 (ASISAKVN). Residue Ser-206 is modified to Phosphoserine. Residue Ser-253 is modified to Phosphoserine. Residues 255–257 (LVG) and 273–277 (SALID) each bind NAD(+). The next 2 membrane-spanning stretches (beta stranded) occupy residues 255–264 (LVGVGYTQTL) and 267–276 (GVKLTLSALI). Residue Lys-279 is modified to N6-acetyllysine; alternate. Residue Lys-279 forms a Glycyl lysine isopeptide (Lys-Gly) (interchain with G-Cter in ubiquitin); alternate linkage. The chain crosses the membrane as a beta stranded span at residues 286 to 295 (HKLGLGLELE). Lys-287 participates in a covalent cross-link: Glycyl lysine isopeptide (Lys-Gly) (interchain with G-Cter in ubiquitin).

This sequence belongs to the eukaryotic mitochondrial porin family. Monomer, homodimer and higher order oligomers; formation of higher order structures is necessary for scramblase activity. In terms of processing, ubiquitinated by PRKN during mitophagy, leading to its degradation and enhancement of mitophagy. Deubiquitinated by USP30.

Its subcellular location is the mitochondrion outer membrane. It localises to the membrane. The enzyme catalyses chloride(in) = chloride(out). It catalyses the reaction K(+)(in) = K(+)(out). The catalysed reaction is a 1,2-diacyl-sn-glycero-3-phospho-L-serine(in) = a 1,2-diacyl-sn-glycero-3-phospho-L-serine(out). It carries out the reaction a 1,2-diacyl-sn-glycero-3-phosphocholine(in) = a 1,2-diacyl-sn-glycero-3-phosphocholine(out). The enzyme catalyses a 1,2-diacyl-sn-glycero-3-phospho-(1D-myo-inositol)(in) = a 1,2-diacyl-sn-glycero-3-phospho-(1D-myo-inositol)(out). Non-selective voltage-gated ion channel that mediates the transport of anions and cations through the mitochondrion outer membrane and plasma membrane. The channel adopts an open conformation at zero mV and a closed conformation at both positive and negative potentials. There are two populations of channels; the main that functions in a lower open-state conductance with lower ion selectivity, that switch, in a voltage-dependent manner, from the open to a low-conducting 'closed' state and the other that has a normal ion selectivity in the typical high conductance, 'open' state. Binds various lipids, including the sphingolipid ceramide, the phospholipid phosphatidylcholine, and the sterols cholesterol and oxysterol. Binding of ceramide promotes the mitochondrial outer membrane permeabilization (MOMP) apoptotic pathway. In terms of biological role, catalyzes the scrambling of phospholipids across the outer mitochondrial membrane; the mechanism is unrelated to channel activity and is capable of translocating both anionic and zwitterionic phospholipids. The protein is Non-selective voltage-gated ion channel VDAC2 of Meleagris gallopavo (Wild turkey).